Here is a 253-residue protein sequence, read N- to C-terminus: Ribonuclease 3 (253 aa).

One can recognise an RNase III domain in the interval 29 to 157; sequence VDELQKTIGH…MLGAVFLDAG (129 aa). Glu70 contributes to the Mg(2+) binding site. The active site involves Asp74. 2 residues coordinate Mg(2+): Asp143 and Glu146. Residue Glu146 is part of the active site. Positions 184 to 253 constitute a DRBM domain; that stretch reads DYKSQLQELT…AARAVATLDK (70 aa).

The protein belongs to the ribonuclease III family. As to quaternary structure, homodimer. Mg(2+) serves as cofactor.

It is found in the cytoplasm. The catalysed reaction is Endonucleolytic cleavage to 5'-phosphomonoester.. Its function is as follows. Digests double-stranded RNA. Involved in the processing of primary rRNA transcript to yield the immediate precursors to the large and small rRNAs (23S and 16S). Processes some mRNAs, and tRNAs when they are encoded in the rRNA operon. Processes pre-crRNA and tracrRNA of type II CRISPR loci if present in the organism. The protein is Ribonuclease 3 of Nitratidesulfovibrio vulgaris (strain ATCC 29579 / DSM 644 / CCUG 34227 / NCIMB 8303 / VKM B-1760 / Hildenborough) (Desulfovibrio vulgaris).